A 192-amino-acid chain; its full sequence is Phosphoheptose isomerase (192 aa).

The 156-residue stretch at 37-192 (LADSFKAGGK…IQLIEKEMEK (156 aa)) folds into the SIS domain. 52 to 54 (NGG) contacts substrate. Residues His-61 and Glu-65 each coordinate Zn(2+). Substrate is bound by residues Glu-65, 93–94 (ND), 119–121 (STS), Ser-124, and Gln-172. Residues Gln-172 and His-180 each coordinate Zn(2+).

The protein belongs to the SIS family. GmhA subfamily. As to quaternary structure, homotetramer. Zn(2+) serves as cofactor.

It is found in the cytoplasm. The catalysed reaction is 2 D-sedoheptulose 7-phosphate = D-glycero-alpha-D-manno-heptose 7-phosphate + D-glycero-beta-D-manno-heptose 7-phosphate. The protein operates within carbohydrate biosynthesis; D-glycero-D-manno-heptose 7-phosphate biosynthesis; D-glycero-alpha-D-manno-heptose 7-phosphate and D-glycero-beta-D-manno-heptose 7-phosphate from sedoheptulose 7-phosphate: step 1/1. In terms of biological role, catalyzes the isomerization of sedoheptulose 7-phosphate in D-glycero-D-manno-heptose 7-phosphate. The polypeptide is Phosphoheptose isomerase (Proteus mirabilis (strain HI4320)).